The following is a 1065-amino-acid chain: MDQEIERVVQAIAIASEPSQSTLFQEALNYIQGIQENANETWRLALQIFVATNGDQGRKYPPQARFWALRVLEEFLENKFDPLDPETFQTLQQAMMSYIQSEYVQGPAEANAPFIRNKFSHTLTLLFLCTYIDQWPSFFTDLFSLIQPSSQSSSTGLNRHISLLFFHLVLEISGEVADQMIKTARTWSAVRHARDGRVRDAVRERDAARINEAVLTIVATNVERMNALKEGDGDSQELGNSIELVDWGIRTFGSYVGWIDINLTVTPTTVPLLFKLLADSSLPIRLATSVALLRIVAKGLKEPADKLQLFKVLSLGQVLDALESKTAKQQRERGDDVDEGEESYREALGKLLNVYGLELTKLVEDAPTDDIRSDASAALVDLQPVTLRFLADDYDDTASTVFPLLQAVLGSYKRSRKVSSGPIDDQKRSFLSALLQVILKKMKWDEEAEPDDVDDDDNGEFEKMRKELRTFMDAILTIDQDLVTDEVRKLALQTISAYQSGTSLKWNDAELGVYLVYIFGEINKSGGKGRAAFCQTPAVIDKDKRKVTDYSEFPLTSHGEMLLALVQSGIVSYPNRTVSLQFFETVTRYADFFKVRKECILPALEAMIDKRGLHNENQQFRIRLYYLFYKFIRESRHEIPSQIALTIINSLPDLLSINVQLSEPEDPESDPLTEAVKSPVFESQLYLFETIGILTSTLSKDTEEQGNLLLSIVKPFMEELLANLQLFRAGSQDLVPVVKVHHIIMALGNISKGFPDHPASTTSENYMAPSFKVFAEIAQAILVCLEAMNVIKPIRDATRFAFARILATAGPTVTGYIPPLMNHLLAHFEPSELVDFMNFISLLIHKLQKDMFEVLDKLIAPLHSHITAILSQAASGTDELRWQIETKKAYLNLLVVILNARLEGIFTSERNSASFEALLGSLLRIVEDVSDPPSQKLALTFFGRCVTVWGQPAGSPNPELGGNLPGFERFIYEQIVPTAFGVVALPSFNPKDGQALMVIHEVASLLQTVCKTRGSEAYDYFLSAFLPSKGWPAEMALDFTTKLRDLDSKNFRKYFTELIRASRSS.

Belongs to the exportin family.

Its subcellular location is the nucleus. It localises to the cytoplasm. Its function is as follows. tRNA nucleus export receptor which facilitates tRNA translocation across the nuclear pore complex. Involved in pre-tRNA splicing, probably by affecting the interaction of pre-tRNA with splicing endonuclease. This Coprinopsis cinerea (strain Okayama-7 / 130 / ATCC MYA-4618 / FGSC 9003) (Inky cap fungus) protein is Exportin-T (LOS1).